Reading from the N-terminus, the 249-residue chain is DNA repair protein RecO (249 aa).

The protein belongs to the RecO family.

Involved in DNA repair and RecF pathway recombination. The chain is DNA repair protein RecO from Exiguobacterium sp. (strain ATCC BAA-1283 / AT1b).